A 261-amino-acid chain; its full sequence is Acidic leucine-rich nuclear phosphoprotein 32 family member A (261 aa).

LRR repeat units lie at residues 16-37 (QITE…TDEY), 39-60 (ALES…PKLP), 61-83 (NLKK…TTSP), and 84-105 (KLQY…KPLE). In terms of domain architecture, LRRCT spans 118 to 156 (NDATQVDNYREKIFKMLPSLNFLDGFDCNDEEVQSDGDD). 2 stretches are compositionally biased toward acidic residues: residues 145–185 (CNDE…EEAN) and 194–229 (YNDD…DGDA). The segment at 145–261 (CNDEEVQSDG…VRGKKRKHDG (117 aa)) is disordered. Residues 238-252 (AKDKDGEKEADESQV) show a composition bias toward basic and acidic residues.

This sequence belongs to the ANP32 family. Post-translationally, phosphorylated on serine residues.

The protein resides in the nucleus. Its subcellular location is the cytoplasm. Its function is as follows. Implicated in a number of cellular processes, including proliferation, differentiation, caspase-dependent and caspase-independent apoptosis, suppression of transformation (tumor suppressor), inhibition of protein phosphatase 2A, regulation of mRNA trafficking and stability, and inhibition of acetyltransferases as part of the INHAT (inhibitor of histone acetyltransferases) complex. This is Acidic leucine-rich nuclear phosphoprotein 32 family member A (Anp32a) from Drosophila melanogaster (Fruit fly).